Reading from the N-terminus, the 356-residue chain is UDP-N-acetylglucosamine--N-acetylmuramyl-(pentapeptide) pyrophosphoryl-undecaprenol N-acetylglucosamine transferase (356 aa).

Residues 12 to 14 (TGG), Asn-124, Arg-163, Ser-188, Ile-242, and Gln-287 each bind UDP-N-acetyl-alpha-D-glucosamine.

This sequence belongs to the glycosyltransferase 28 family. MurG subfamily.

It is found in the cell inner membrane. It catalyses the reaction di-trans,octa-cis-undecaprenyl diphospho-N-acetyl-alpha-D-muramoyl-L-alanyl-D-glutamyl-meso-2,6-diaminopimeloyl-D-alanyl-D-alanine + UDP-N-acetyl-alpha-D-glucosamine = di-trans,octa-cis-undecaprenyl diphospho-[N-acetyl-alpha-D-glucosaminyl-(1-&gt;4)]-N-acetyl-alpha-D-muramoyl-L-alanyl-D-glutamyl-meso-2,6-diaminopimeloyl-D-alanyl-D-alanine + UDP + H(+). It functions in the pathway cell wall biogenesis; peptidoglycan biosynthesis. Its function is as follows. Cell wall formation. Catalyzes the transfer of a GlcNAc subunit on undecaprenyl-pyrophosphoryl-MurNAc-pentapeptide (lipid intermediate I) to form undecaprenyl-pyrophosphoryl-MurNAc-(pentapeptide)GlcNAc (lipid intermediate II). The chain is UDP-N-acetylglucosamine--N-acetylmuramyl-(pentapeptide) pyrophosphoryl-undecaprenol N-acetylglucosamine transferase from Pseudomonas fluorescens (strain Pf0-1).